The following is a 151-amino-acid chain: MKLILTAEVEHLGVAGDTVEVKDGYGRNYLLPRGLAIVATRGAQRQADDIRRAQELKGVKGLEHARELKTAIEALESVELSVKTAGDSGKLFGSVTAADVVSAIKKAGGPNLEKRTVDLPKAHIKSTGTHPITVRLHPDVNAALSLNVVAG.

Belongs to the bacterial ribosomal protein bL9 family.

Functionally, binds to the 23S rRNA. The sequence is that of Large ribosomal subunit protein bL9 from Mycolicibacterium gilvum (strain PYR-GCK) (Mycobacterium gilvum (strain PYR-GCK)).